The following is an 873-amino-acid chain: MEGPEIKAVEAVIDNGSFGRRTVRFETGRLARQADGAVAAYLDDDSMVLSTTTAGSSPKENYDFFPLTVDVEEKMYAAGKIPGSFFRREGRPSSEAILACRIIDRPLRPLFPHTLRNEVQVVETVLAVNPEDSYDVLALNAASASTLISGLPFTGPVGGVRLALIDGQWVAFPRWSERERAVFEIVVAGRVVESGDVAIAMIEAGAGKNAWNLIYDEGQQKPDEEVVAGGLEAAKPFIKVLCDAQNELKRLAAKETREFTLFPEYTDDLYNRIDEIAHADLDEALSIAEKLPRQERIAEIKQRVKDTLSVEFTDMDEMEKDKEIGNAFKELQRQIVRRRILTQDYRIDGRGLRDIRTLSAEIDVVPRVHGSALFQRGETQILGITTLNMLKMEQQIDALSGPTTKRYMHNYEMPPYSTGETGRVGSPKRREIGHGALAEKAIVPVLPSREEFPYAIRQVSEAIGSNGSTSMGSVCASTLSLLAAGVPLKAPVAGIAMGLVSGDVDGQHIYKTLTDILGAEDAFGDMDFKVAGTADFITALQLDTKLDGIPADVLAGALKQAHEARKTILEVINECIDGPAEMSPFAPRIITTTVPVDKIGEVIGPKGKMINQIQEDTGAEIAIEDDGTVYISSEGGEAAEKAKQIIDEIANPHVPQAGETYKGTVVKTTSFGAFVNLTPGIDGLLHISQIRNLADGQRIDAVEDVLKEGDSVEVVVQGVDDRGKISLAIPGFENQENNAGGRRSDDRPRRDDRRHSDDRRRDDRPRRRSDDRDRDYDDRPRRRRDYDDDRDYDDRPRRRSHRDYDDDRDYDDRPRRSDRRRDYDDDRPRRRRNDDRNPRYVADENYDEYREGREVRHERPRRRVRRDFDPFDD.

D521 and D527 together coordinate Mg(2+). Positions P587–I646 constitute a KH domain. An S1 motif domain is found at G658–P730. Positions L727–D873 are disordered. Basic and acidic residues predominate over residues R742–H857.

The protein belongs to the polyribonucleotide nucleotidyltransferase family. Mg(2+) is required as a cofactor.

The protein localises to the cytoplasm. The enzyme catalyses RNA(n+1) + phosphate = RNA(n) + a ribonucleoside 5'-diphosphate. Functionally, involved in mRNA degradation. Catalyzes the phosphorolysis of single-stranded polyribonucleotides processively in the 3'- to 5'-direction. The sequence is that of Polyribonucleotide nucleotidyltransferase from Bifidobacterium animalis subsp. lactis (strain AD011).